We begin with the raw amino-acid sequence, 1335 residues long: Restriction of telomere capping protein 1 (1335 aa).

The interval 1–39 (MSLSPHVENASIPKGSTPIPKNRNVSSIGKGEFLGSSSS) is disordered. 6 WD repeats span residues 207-248 (NKFS…SIDN), 256-296 (EHTR…SKSS), 305-342 (TASD…YKFA), 367-406 (AHTG…NAAE), 439-486 (NTGY…IPKH), and 489-527 (LSET…TVLE). Disordered stretches follow at residues 559–593 (PELQ…IGGI), 600–619 (TGLT…GPTF), 630–651 (ASSF…ENRE), 736–758 (KNAT…DDDD), and 783–824 (NEKV…DRSR). Residues 630–644 (ASSFNSSSASLTSLT) are compositionally biased toward low complexity. The span at 808–817 (SSISSISASR) shows a compositional bias: low complexity. The stretch at 844-884 (LISIATHNASVYLSIDDLTNFKIWILIRDSLLWDLKWMTSS) is one WD 7 repeat. Disordered regions lie at residues 935–956 (AFRA…KLKE) and 1007–1037 (DEHE…KSIP). 2 stretches are compositionally biased toward basic and acidic residues: residues 945 to 956 (DAEKKPVSKLKE) and 1009 to 1021 (HEHQ…HDSP). Phosphoserine occurs at positions 1030, 1074, 1081, 1083, 1117, and 1127. 2 WD repeats span residues 1130 to 1170 (REQL…TETG) and 1217 to 1256 (VLKY…KEKL). The RING-type; degenerate zinc finger occupies 1294–1335 (LKKLTMVILPCGHEGHFQCIQEWFLDENEQECPGGCPGVAFI).

The protein belongs to the WD repeat RTC1 family.

The protein localises to the vacuole. Its function is as follows. May be involved in a process influencing telomere capping. The protein is Restriction of telomere capping protein 1 (RTC1) of Saccharomyces cerevisiae (strain YJM789) (Baker's yeast).